A 430-amino-acid chain; its full sequence is Arrestin-related trafficking adapter 10 (430 aa).

Residues 55-75 are disordered; it reads AEADRHSSRLPQDPQTQYTKE. Over residues 63-72 the composition is skewed to polar residues; the sequence is RLPQDPQTQY.

The protein belongs to the ART10 family.

It localises to the cytoplasm. May regulate endocytosis by recruiting RSP5 ubiquitin ligase activity to specific plasma membrane proteins in response to extracellular stimuli. The chain is Arrestin-related trafficking adapter 10 (ART10) from Eremothecium gossypii (strain ATCC 10895 / CBS 109.51 / FGSC 9923 / NRRL Y-1056) (Yeast).